Here is a 149-residue protein sequence, read N- to C-terminus: Squidulin (149 aa).

Alanine 1 is subject to N-acetylalanine. EF-hand domains follow at residues 7-42, 43-78, 80-115, and 117-149; these read KQIAEIKDAFDMFDIDGDGQITSKELRSVMKSLGRT, PSDAELEEMIREVDTDGNGTIEYAEFVEMMAKQMGP, DPEKEMREAFRVFDKDGNGLITAAELRQVMANFSDE, and LTSEEISEMIREADIDGDGMVNYEEFVKMMTPK. Positions 20, 22, 24, 26, 31, 56, 58, 60, 62, 67, 93, 95, 97, 104, 130, 132, 134, 136, and 141 each coordinate Ca(2+).

This sequence belongs to the calmodulin family.

In terms of biological role, not known. This protein has four functional calcium-binding sites. The chain is Squidulin from Doryteuthis pealeii (Longfin inshore squid).